A 166-amino-acid chain; its full sequence is Putative membrane protein 164 (166 aa).

At 1-4 the chain is on the intravirion side; sequence MYHP. The chain crosses the membrane as a helical span at residues 5–25; that stretch reads VVQVLIGLILVIILILGFYHL. The Virion surface portion of the chain corresponds to 26 to 166; the sequence is KKKSCKTDTD…TIMGIARNIL (141 aa).

It belongs to the asfivirus envelope protein p22 family.

The protein localises to the virion membrane. Its subcellular location is the host cell membrane. This chain is Putative membrane protein 164, found in Ornithodoros (relapsing fever ticks).